Reading from the N-terminus, the 430-residue chain is Protein trichome birefringence-like 24 (430 aa).

Residues 15–35 (VLLIKLISAILISFFAFRLFI) traverse the membrane as a helical; Signal-anchor for type II membrane protein segment. Positions 153-155 (GDS) match the GDS motif motif. A DCXHWCLPGXXDXWN motif motif is present at residues 406–420 (DCLHWCLPGPFDYLN).

The protein belongs to the PC-esterase family. TBL subfamily.

Its subcellular location is the membrane. In terms of biological role, may act as a bridging protein that binds pectin and other cell wall polysaccharides. Probably involved in maintaining esterification of pectins. May be involved in the specific O-acetylation of cell wall polymers. The polypeptide is Protein trichome birefringence-like 24 (TBL24) (Arabidopsis thaliana (Mouse-ear cress)).